A 293-amino-acid chain; its full sequence is Shikimate dehydrogenase (NADP(+)) (293 aa).

Residues 26–28 and threonine 73 each bind shikimate; that span reads SKS. The active-site Proton acceptor is lysine 77. Glutamate 89 serves as a coordination point for NADP(+). Residues asparagine 98 and aspartate 113 each coordinate shikimate. Residues 137–141, 161–166, and isoleucine 231 contribute to the NADP(+) site; these read GAGGA and NRTRQR. Position 233 (tyrosine 233) interacts with shikimate. Residue glycine 254 participates in NADP(+) binding.

Belongs to the shikimate dehydrogenase family. In terms of assembly, homodimer.

It carries out the reaction shikimate + NADP(+) = 3-dehydroshikimate + NADPH + H(+). It functions in the pathway metabolic intermediate biosynthesis; chorismate biosynthesis; chorismate from D-erythrose 4-phosphate and phosphoenolpyruvate: step 4/7. Its function is as follows. Involved in the biosynthesis of the chorismate, which leads to the biosynthesis of aromatic amino acids. Catalyzes the reversible NADPH linked reduction of 3-dehydroshikimate (DHSA) to yield shikimate (SA). This chain is Shikimate dehydrogenase (NADP(+)), found in Bartonella quintana (strain Toulouse) (Rochalimaea quintana).